The chain runs to 251 residues: 5-oxoprolinase subunit A (251 aa).

The protein belongs to the LamB/PxpA family. In terms of assembly, forms a complex composed of PxpA, PxpB and PxpC.

The catalysed reaction is 5-oxo-L-proline + ATP + 2 H2O = L-glutamate + ADP + phosphate + H(+). Its function is as follows. Catalyzes the cleavage of 5-oxoproline to form L-glutamate coupled to the hydrolysis of ATP to ADP and inorganic phosphate. This is 5-oxoprolinase subunit A from Tolumonas auensis (strain DSM 9187 / NBRC 110442 / TA 4).